A 352-amino-acid chain; its full sequence is MNGTEGPDFYIPFSNKTGVVRSPFEYPQYYLAEPWKYSALAAYMFMLIILGFPINFLTLYVTVQHKKLRSPLNYILLNLAVADLFMVLGGFTTTLYTSMNGYFVFGVTGCYFEGFFATLGGEVALWCLVVLAIERYIVVCKPMSNFRFGENHAIMGVVFTWIMALTCAAPPLVGWSRYIPEGMQCSCGVDYYTLKPEVNNESFVIYMFVVHFAIPLAVIFFCYGRLVCTVKEAAAQQQESATTQKAEKEVTRMVIIMVVSFLICWVPYASVAFYIFSNQGSDFGPVFMTIPAFFAKSSAIYNPVIYIVMNKQFRNCMITTLCCGKNPLGDDETATGSKTETSSVSTSQVSPA.

Residues 1-36 (MNGTEGPDFYIPFSNKTGVVRSPFEYPQYYLAEPWK) lie on the Extracellular side of the membrane. N-linked (GlcNAc...) asparagine glycans are attached at residues Asn-2 and Asn-15. A helical transmembrane segment spans residues 37 to 61 (YSALAAYMFMLIILGFPINFLTLYV). Topologically, residues 62-73 (TVQHKKLRSPLN) are cytoplasmic. Residues 74–96 (YILLNLAVADLFMVLGGFTTTLY) form a helical membrane-spanning segment. Residues 97–110 (TSMNGYFVFGVTGC) lie on the Extracellular side of the membrane. A disulfide bond links Cys-110 and Cys-187. A helical transmembrane segment spans residues 111-133 (YFEGFFATLGGEVALWCLVVLAI). The short motif at 134 to 136 (ERY) is the 'Ionic lock' involved in activated form stabilization element. Residues 134-152 (ERYIVVCKPMSNFRFGENH) lie on the Cytoplasmic side of the membrane. The helical transmembrane segment at 153-173 (AIMGVVFTWIMALTCAAPPLV) threads the bilayer. Over 174–202 (GWSRYIPEGMQCSCGVDYYTLKPEVNNES) the chain is Extracellular. The chain crosses the membrane as a helical span at residues 203 to 224 (FVIYMFVVHFAIPLAVIFFCYG). The Cytoplasmic segment spans residues 225–252 (RLVCTVKEAAAQQQESATTQKAEKEVTR). Residues 253 to 274 (MVIIMVVSFLICWVPYASVAFY) form a helical membrane-spanning segment. The Extracellular portion of the chain corresponds to 275-286 (IFSNQGSDFGPV). A helical membrane pass occupies residues 287–308 (FMTIPAFFAKSSAIYNPVIYIV). An N6-(retinylidene)lysine modification is found at Lys-296. Topologically, residues 309–352 (MNKQFRNCMITTLCCGKNPLGDDETATGSKTETSSVSTSQVSPA) are cytoplasmic. 2 S-palmitoyl cysteine lipidation sites follow: Cys-322 and Cys-323. Positions 332-352 (ETATGSKTETSSVSTSQVSPA) are disordered. Residues 335–352 (TGSKTETSSVSTSQVSPA) are compositionally biased toward low complexity.

This sequence belongs to the G-protein coupled receptor 1 family. Opsin subfamily. Contains one covalently linked retinal chromophore. Upon light absorption, the covalently bound 11-cis-retinal is converted to all-trans-retinal. After hydrolysis of the Schiff base and release of the covalently bound all-trans-retinal, active rhodopsin is regenerated by binding of a fresh molecule of 11-cis-retinal. Expressed in rod-shaped photoreceptor cells in the retina that mediate vision in dim ligh (at protein level).

The protein localises to the membrane. It localises to the cell projection. It is found in the cilium. Its subcellular location is the photoreceptor outer segment. Its function is as follows. Photoreceptor required for image-forming vision at low light intensity. Required for photoreceptor cell viability after birth. Light-induced isomerization of 11-cis to all-trans retinal triggers a conformational change that activates signaling via G-proteins. Subsequent receptor phosphorylation mediates displacement of the bound G-protein alpha subunit by arrestin and terminates signaling. The polypeptide is Rhodopsin (RHO) (Alligator mississippiensis (American alligator)).